The chain runs to 413 residues: Phosphopentomutase (413 aa).

Residues aspartate 11, aspartate 306, histidine 311, aspartate 347, histidine 348, and histidine 359 each contribute to the Mn(2+) site.

Belongs to the phosphopentomutase family. It depends on Mn(2+) as a cofactor.

It localises to the cytoplasm. It catalyses the reaction 2-deoxy-alpha-D-ribose 1-phosphate = 2-deoxy-D-ribose 5-phosphate. The catalysed reaction is alpha-D-ribose 1-phosphate = D-ribose 5-phosphate. It participates in carbohydrate degradation; 2-deoxy-D-ribose 1-phosphate degradation; D-glyceraldehyde 3-phosphate and acetaldehyde from 2-deoxy-alpha-D-ribose 1-phosphate: step 1/2. Isomerase that catalyzes the conversion of deoxy-ribose 1-phosphate (dRib-1-P) and ribose 1-phosphate (Rib-1-P) to deoxy-ribose 5-phosphate (dRib-5-P) and ribose 5-phosphate (Rib-5-P), respectively. This Helicobacter acinonychis (strain Sheeba) protein is Phosphopentomutase.